The following is a 328-amino-acid chain: Tetraacyldisaccharide 4'-kinase (328 aa).

ATP is bound at residue 55–62 (TAGGNGKT).

It belongs to the LpxK family.

It catalyses the reaction a lipid A disaccharide + ATP = a lipid IVA + ADP + H(+). It participates in glycolipid biosynthesis; lipid IV(A) biosynthesis; lipid IV(A) from (3R)-3-hydroxytetradecanoyl-[acyl-carrier-protein] and UDP-N-acetyl-alpha-D-glucosamine: step 6/6. In terms of biological role, transfers the gamma-phosphate of ATP to the 4'-position of a tetraacyldisaccharide 1-phosphate intermediate (termed DS-1-P) to form tetraacyldisaccharide 1,4'-bis-phosphate (lipid IVA). The protein is Tetraacyldisaccharide 4'-kinase of Escherichia coli (strain K12 / MC4100 / BW2952).